Here is a 492-residue protein sequence, read N- to C-terminus: 2,3-bisphosphoglycerate-independent phosphoglycerate mutase (492 aa).

The Mn(2+) site is built by aspartate 11 and serine 61. The active-site Phosphoserine intermediate is the serine 61. Residues histidine 118, 147 to 148 (RD), arginine 177, arginine 183, 248 to 251 (RSDR), and lysine 321 contribute to the substrate site. Mn(2+) contacts are provided by aspartate 387, histidine 391, aspartate 428, histidine 429, and histidine 446.

The protein belongs to the BPG-independent phosphoglycerate mutase family. As to quaternary structure, monomer. It depends on Mn(2+) as a cofactor.

It catalyses the reaction (2R)-2-phosphoglycerate = (2R)-3-phosphoglycerate. It functions in the pathway carbohydrate degradation; glycolysis; pyruvate from D-glyceraldehyde 3-phosphate: step 3/5. Its function is as follows. Catalyzes the interconversion of 2-phosphoglycerate and 3-phosphoglycerate. The polypeptide is 2,3-bisphosphoglycerate-independent phosphoglycerate mutase (Wolinella succinogenes (strain ATCC 29543 / DSM 1740 / CCUG 13145 / JCM 31913 / LMG 7466 / NCTC 11488 / FDC 602W) (Vibrio succinogenes)).